A 174-amino-acid chain; its full sequence is U-stichotoxin-Hau2a (174 aa).

An N-terminal signal peptide occupies residues 1-18 (MKPIFIVALLFSTCLVNA). The propeptide occupies 19–33 (KPSINDADIKREPEP). A Hydroxyproline modification is found at P39. 2 disulfide bridges follow: C40/C51 and C43/C58. Positions 61–67 (RKREPEP) are excised as a propeptide. Hydroxyproline is present on P73. Intrachain disulfides connect C74/C85 and C77/C92. Residues 95–101 (RKREPEP) constitute a propeptide that is removed on maturation. P107 is modified (hydroxyproline). Intrachain disulfides connect C108–C119 and C111–C126. Positions 129-135 (RKREPEP) are excised as a propeptide. P141 is subject to Hydroxyproline. Disulfide bonds link C142–C153 and C145–C160. A propeptide spanning residues 163 to 174 (RKREPENQDLWS) is cleaved from the precursor.

This sequence belongs to the sea anemone BBH family.

It localises to the secreted. It is found in the nematocyst. Neurotoxin that paralyzes freshwater crabs at high concentration. The sequence is that of U-stichotoxin-Hau2a from Heteractis aurora (Banded sea anemone).